The primary structure comprises 581 residues: DNA primase (581 aa).

The segment at Cys40–Cys64 adopts a CHC2-type zinc-finger fold. In terms of domain architecture, Toprim spans Gln259–Pro341. Mg(2+)-binding residues include Glu265, Asp309, and Asp311.

Belongs to the DnaG primase family. Monomer. Interacts with DnaB. Requires Zn(2+) as cofactor. Mg(2+) is required as a cofactor.

It carries out the reaction ssDNA + n NTP = ssDNA/pppN(pN)n-1 hybrid + (n-1) diphosphate.. Its function is as follows. RNA polymerase that catalyzes the synthesis of short RNA molecules used as primers for DNA polymerase during DNA replication. This Salmonella typhimurium (strain LT2 / SGSC1412 / ATCC 700720) protein is DNA primase.